The chain runs to 180 residues: Signal peptidase complex subunit 3 (180 aa).

The Cytoplasmic segment spans residues 1–11; sequence MNTVLSRANSL. Residues 12–32 traverse the membrane as a helical; Signal-anchor for type II membrane protein segment; the sequence is FAFSLSVMAALTFGCFITTAF. Residues 33 to 180 are Lumenal-facing; the sequence is KERSVPVSIA…PDTYETTKSY (148 aa). Residue asparagine 141 is glycosylated (N-linked (GlcNAc...) asparagine).

The protein belongs to the SPCS3 family. In terms of assembly, component of the signal peptidase complex paralog A (SPC-A) composed of a catalytic subunit SEC11A and three accessory subunits SPCS1, SPCS2 and SPCS3. Component of the signal peptidase complex paralog C (SPC-C) composed of a catalytic subunit SEC11C and three accessory subunits SPCS1, SPCS2 and SPCS3. The complex induces a local thinning of the ER membrane which is used to measure the length of the signal peptide (SP) h-region of protein substrates. This ensures the selectivity of the complex towards h-regions shorter than 18-20 amino acids. Expressed in hen oviduct (at protein level).

The protein localises to the endoplasmic reticulum membrane. Its function is as follows. Essential component of the signal peptidase complex (SPC) which catalyzes the cleavage of N-terminal signal sequences from nascent proteins as they are translocated into the lumen of the endoplasmic reticulum. Essential for the SPC catalytic activity, possibly by stabilizing and positioning the active center of the complex close to the lumenal surface. In Gallus gallus (Chicken), this protein is Signal peptidase complex subunit 3.